The sequence spans 158 residues: 2-C-methyl-D-erythritol 2,4-cyclodiphosphate synthase (158 aa).

A divalent metal cation contacts are provided by Asp-9 and His-11. 4-CDP-2-C-methyl-D-erythritol 2-phosphate-binding positions include 9 to 11 and 35 to 36; these read DVH and HS. A divalent metal cation is bound at residue His-43. Residues 57–59, 62–66, 101–107, 133–136, Phe-140, and Arg-143 contribute to the 4-CDP-2-C-methyl-D-erythritol 2-phosphate site; these read DIG, FPDTD, AQKPKMA, and TTTE.

Belongs to the IspF family. As to quaternary structure, homotrimer. The cofactor is a divalent metal cation.

The catalysed reaction is 4-CDP-2-C-methyl-D-erythritol 2-phosphate = 2-C-methyl-D-erythritol 2,4-cyclic diphosphate + CMP. It functions in the pathway isoprenoid biosynthesis; isopentenyl diphosphate biosynthesis via DXP pathway; isopentenyl diphosphate from 1-deoxy-D-xylulose 5-phosphate: step 4/6. Its function is as follows. Involved in the biosynthesis of isopentenyl diphosphate (IPP) and dimethylallyl diphosphate (DMAPP), two major building blocks of isoprenoid compounds. Catalyzes the conversion of 4-diphosphocytidyl-2-C-methyl-D-erythritol 2-phosphate (CDP-ME2P) to 2-C-methyl-D-erythritol 2,4-cyclodiphosphate (ME-CPP) with a corresponding release of cytidine 5-monophosphate (CMP). The chain is 2-C-methyl-D-erythritol 2,4-cyclodiphosphate synthase from Bacillus pumilus (strain SAFR-032).